Consider the following 65-residue polypeptide: Large ribosomal subunit protein bL33c (65 aa).

This sequence belongs to the bacterial ribosomal protein bL33 family.

It is found in the plastid. The chain is Large ribosomal subunit protein bL33c from Aneura mirabilis (Parasitic liverwort).